Consider the following 511-residue polypeptide: Potassium voltage-gated channel subfamily A member 10 (511 aa).

The interval 25–44 (EPGYATDFDPTSSKGRPGSS) is disordered. A helical membrane pass occupies residues 218–238 (VAVVSVLVVVISITIFCLETL). A helical membrane pass occupies residues 271–292 (FFMVESTCIVWFTFELVLRFVV). Cys-293 carries S-palmitoyl cysteine lipidation. Residues 303-323 (IMNIIDIISIIPYFATLITEL) traverse the membrane as a helical segment. The helical; Voltage-sensor transmembrane segment at 339–358 (ILRIIRLVRVFRIFKLSRHS) threads the bilayer. A helical transmembrane segment spans residues 375–395 (LGLLIFFLFIGVILFSSAVYF). The Selectivity filter motif lies at 421-426 (TVGYGD). The chain crosses the membrane as a helical span at residues 436-456 (IVGTLCAIAGVLTIALPVPVI). The segment at 489-511 (SRMGSTESLNKTNGSCSAEKSRK) is disordered.

Belongs to the potassium channel family. A (Shaker) (TC 1.A.1.2) subfamily. Kv1.8/KCNA10 sub-subfamily. Homotetramer. Interacts with KCN4B/POMP. Interaction with KCN4B/POMP is necessary for the modulation of channel activity by cAMP. In terms of tissue distribution, expressed strongly in the inner ear and weakly in skeletal muscle. Not detected in other tissues.

Its subcellular location is the membrane. The enzyme catalyses K(+)(in) = K(+)(out). Its activity is regulated as follows. The channel activity is up-regulated by cAMP. In terms of biological role, voltage-gated potassium ion channel that mediates K(+) permeability of excitable membranes. When opened in response to the voltage difference across the membrane, KCNA10 channel selectively allows the flow of potassium ions across the membrane down their electrochemical gradient. The polypeptide is Potassium voltage-gated channel subfamily A member 10 (Mus musculus (Mouse)).